Consider the following 509-residue polypeptide: Probable cytochrome P450 6a14 (509 aa).

Cys454 lines the heme pocket.

The protein belongs to the cytochrome P450 family. Heme is required as a cofactor.

It is found in the endoplasmic reticulum membrane. The protein localises to the microsome membrane. Functionally, may be involved in the metabolism of insect hormones and in the breakdown of synthetic insecticides. This is Probable cytochrome P450 6a14 (Cyp6a14) from Drosophila melanogaster (Fruit fly).